The chain runs to 1439 residues: Myomesin-3 (1439 aa).

Residues 1–57 (MTLPHSPGSAGEPQASQTVQVHRLEHRQEEEQKEERQHSLQMGSSVQRRTYRSSEEE) form a disordered region. Basic and acidic residues predominate over residues 22–38 (HRLEHRQEEEQKEERQH). The span at 39–48 (SLQMGSSVQR) shows a compositional bias: polar residues. A coiled-coil region spans residues 119-149 (QRLLRQRRDWKALRQRTEEKVREAKELIELC). Ig-like C2-type domains lie at 154-246 (PWFW…AKVL) and 269-362 (PSAE…AYVF). Fibronectin type-III domains follow at residues 376-471 (SPLN…TGDY), 504-599 (APTN…LKGK), 605-698 (PPAQ…VKQA), 704-799 (APYD…CKEW), and 806-901 (PPYD…LEDK). Ig-like C2-type domains lie at 1122–1207 (PYFQ…LDLT) and 1336–1425 (AKVV…VTIS).

As to quaternary structure, homodimer. Mainly expressed in slow muscle, extraocular muscle and embryonic/neonatal skeletal muscle (at protein level). Expression in skeletal muscle is fiber type specific, with the highest levels in type IIA fibers (intermediate speed) and lower levels in type I fibers.

It is found in the cytoplasm. It localises to the myofibril. The protein localises to the sarcomere. The protein resides in the m line. May link the intermediate filament cytoskeleton to the M-disk of the myofibrils in striated muscle. In Mus musculus (Mouse), this protein is Myomesin-3 (Myom3).